The chain runs to 82 residues: RNA-binding protein TTE2299 (82 aa).

The protein belongs to the eukaryotic ribosomal protein eL8 family.

The sequence is that of RNA-binding protein TTE2299 from Caldanaerobacter subterraneus subsp. tengcongensis (strain DSM 15242 / JCM 11007 / NBRC 100824 / MB4) (Thermoanaerobacter tengcongensis).